The sequence spans 320 residues: Malate dehydrogenase (320 aa).

NAD(+) is bound by residues 10-15 (GAGQIG) and D34. 2 residues coordinate substrate: R83 and R89. Residues N96 and 119 to 121 (ITN) each bind NAD(+). Substrate contacts are provided by N121 and R152. The active-site Proton acceptor is H176.

Belongs to the LDH/MDH superfamily. MDH type 3 family.

It carries out the reaction (S)-malate + NAD(+) = oxaloacetate + NADH + H(+). Its function is as follows. Catalyzes the reversible oxidation of malate to oxaloacetate. This Dinoroseobacter shibae (strain DSM 16493 / NCIMB 14021 / DFL 12) protein is Malate dehydrogenase.